Consider the following 420-residue polypeptide: Calreticulin (420 aa).

The first 18 residues, 1 to 18, serve as a signal peptide directing secretion; it reads MKWGVVAVLATLVVAASA. Cysteines 106 and 140 form a disulfide. The an alpha-D-glucoside site is built by Y110, K112, Y131, and D138. 7 tandem repeats follow at residues 194–205, 213–224, 230–241, 248–259, 263–273, 277–287, and 291–301. The interval 194–259 is 4 X approximate repeats; it reads VASGSLYEDW…DAKKPEDWDD (66 aa). Basic and acidic residues predominate over residues 210 to 220; that stretch reads TIKDPKASKPE. Residues 210–272 form a disordered region; sequence TIKDPKASKP…GTWEPPMIPN (63 aa). A compositionally biased stretch (acidic residues) spans 221-230; that stretch reads DWDEREEIAD. A 3 X approximate repeats region spans residues 263–301; sequence GTWEPPMIPNPEYKGEWKAKMIKNPAYKGIWVAPDIDNP. E321 lines the an alpha-D-glucoside pocket. A compositionally biased stretch (basic and acidic residues) spans 357–376; the sequence is EEKAMFDKVKKEEDEKKAKD. Residues 357–420 form a disordered region; the sequence is EEKAMFDKVK…EEEESGHDEL (64 aa). 2 stretches are compositionally biased toward acidic residues: residues 385 to 398 and 411 to 420; these read EAAE…EDKE and EEEESGHDEL. The Prevents secretion from ER signature appears at 417 to 420; that stretch reads HDEL.

Belongs to the calreticulin family.

Its subcellular location is the endoplasmic reticulum lumen. In terms of biological role, molecular calcium-binding chaperone promoting folding, oligomeric assembly and quality control in the ER via the calreticulin/calnexin cycle. This lectin may interact transiently with almost all of the monoglucosylated glycoproteins that are synthesized in the ER. The sequence is that of Calreticulin from Chlamydomonas reinhardtii (Chlamydomonas smithii).